Consider the following 413-residue polypeptide: Serine hydroxymethyltransferase (413 aa).

(6S)-5,6,7,8-tetrahydrofolate is bound by residues Leu-117 and 121-123; that span reads GHL. Position 226 is an N6-(pyridoxal phosphate)lysine (Lys-226). (6S)-5,6,7,8-tetrahydrofolate is bound by residues Glu-239 and 349 to 351; that span reads SPF.

It belongs to the SHMT family. Homodimer. Requires pyridoxal 5'-phosphate as cofactor.

The protein resides in the cytoplasm. The catalysed reaction is (6R)-5,10-methylene-5,6,7,8-tetrahydrofolate + glycine + H2O = (6S)-5,6,7,8-tetrahydrofolate + L-serine. It functions in the pathway one-carbon metabolism; tetrahydrofolate interconversion. It participates in amino-acid biosynthesis; glycine biosynthesis; glycine from L-serine: step 1/1. In terms of biological role, catalyzes the reversible interconversion of serine and glycine with tetrahydrofolate (THF) serving as the one-carbon carrier. This reaction serves as the major source of one-carbon groups required for the biosynthesis of purines, thymidylate, methionine, and other important biomolecules. Also exhibits THF-independent aldolase activity toward beta-hydroxyamino acids, producing glycine and aldehydes, via a retro-aldol mechanism. The protein is Serine hydroxymethyltransferase of Bacillus cereus (strain AH187).